The primary structure comprises 434 residues: F-box/LRR-repeat protein 21 (434 aa).

The F-box domain occupies 39-85 (LLDWGTLPHHVILQIFQYLPLIDRARASSVCRRWNEVFHIPDLWRKF). 6 LRR repeats span residues 187-213 (DTPV…KMSS), 214-239 (CPHV…ALNY), 242-265 (LSDE…RIDV), 322-347 (GRSV…VVCA), 349-374 (GLLP…GLSE), and 375-400 (CEVS…SIME).

Part of the SCF (SKP1-CUL1-F-box) E3 ubiquitin-protein ligase complex SCF(FBXL21) composed of CUL1, SKP1, RBX1 and FBXL21. Interacts with CRY1 and CRY2. As to expression, expressed in the hypothalamus, especially in the suprachiasmatic nucleus (SCN). Expression is driven by the core-clock. There is a pronounced diurnal and circadian expression rhythms rising rapidly at the start of the day and declining at the onset of the night.

The protein resides in the cytoplasm. It is found in the cytosol. The protein localises to the nucleus. Its pathway is protein modification; protein ubiquitination. Functionally, substrate-recognition component of the SCF(FBXL21) E3 ubiquitin ligase complex involved in circadian rhythm function. Plays a key role in the maintenance of both the speed and the robustness of the circadian clock oscillation. The SCF(FBXL21) complex mainly acts in the cytosol and mediates ubiquitination of CRY proteins (CRY1 and CRY2), leading to CRY proteins stabilization. The SCF(FBXL21) complex counteracts the activity of the SCF(FBXL3) complex and protects CRY proteins from degradation. Involved in the hypothalamic suprachiasmatic nucleus (SCN) clock regulating temporal organization of the daily activities. The sequence is that of F-box/LRR-repeat protein 21 (Fbxl21) from Mus musculus (Mouse).